Here is a 1161-residue protein sequence, read N- to C-terminus: Nuclear pore complex-interacting protein family member B11 (1161 aa).

The chain crosses the membrane as a helical span at residues 63–87; it reads IIIAFPTSYKVVITLWIVYLWVSLL. Disordered stretches follow at residues 278 to 580 and 892 to 1161; these read ADDN…DDNI and SADD…RRLS. Residues 311–321 show a composition bias toward pro residues; the sequence is PLPPSAPPSAP. Basic and acidic residues-rich tracts occupy residues 368 to 378, 410 to 420, 452 to 462, 494 to 504, 536 to 546, 918 to 928, 960 to 970, 1002 to 1012, and 1044 to 1054; these read DNIKTTAERLR, DNIKTPAEHLR, DNIKTPAERLR, and DNIKTTAEHLR.

Belongs to the NPIP family.

The protein localises to the membrane. This is Nuclear pore complex-interacting protein family member B11 (NPIPB11) from Homo sapiens (Human).